A 574-amino-acid chain; its full sequence is Septation ring formation regulator EzrA (574 aa).

At 1–7 (MSSGIIL) the chain is on the extracellular side. A helical membrane pass occupies residues 8–26 (LLVAIVLLVIIAYVVGVVI). Topologically, residues 27–574 (RKRNDTLIAN…YEKTQERIRF (548 aa)) are cytoplasmic. 3 coiled-coil regions span residues 104–141 (VRAKHEIDNVDSQLTIIEEDIVSIREALEVLKEQEEKN), 275–343 (LVSL…SAKY), and 473–525 (DIEA…VQKS).

Belongs to the EzrA family.

It is found in the cell membrane. Functionally, negative regulator of FtsZ ring formation; modulates the frequency and position of FtsZ ring formation. Inhibits FtsZ ring formation at polar sites. Interacts either with FtsZ or with one of its binding partners to promote depolymerization. In Streptococcus agalactiae serotype III (strain NEM316), this protein is Septation ring formation regulator EzrA.